The following is a 154-amino-acid chain: GTP-dependent dephospho-CoA kinase (154 aa).

GTP is bound by residues D34, D53, and E107.

It belongs to the GTP-dependent DPCK family.

It carries out the reaction 3'-dephospho-CoA + GTP = GDP + CoA + H(+). It participates in cofactor biosynthesis; coenzyme A biosynthesis. Catalyzes the GTP-dependent phosphorylation of the 3'-hydroxyl group of dephosphocoenzyme A to form coenzyme A (CoA). The protein is GTP-dependent dephospho-CoA kinase of Nitrosopumilus maritimus (strain SCM1).